We begin with the raw amino-acid sequence, 145 residues long: D-aminoacyl-tRNA deacylase (145 aa).

Residues 137 to 138 (GP) carry the Gly-cisPro motif, important for rejection of L-amino acids motif.

Belongs to the DTD family. Homodimer.

Its subcellular location is the cytoplasm. It catalyses the reaction glycyl-tRNA(Ala) + H2O = tRNA(Ala) + glycine + H(+). The enzyme catalyses a D-aminoacyl-tRNA + H2O = a tRNA + a D-alpha-amino acid + H(+). Its function is as follows. An aminoacyl-tRNA editing enzyme that deacylates mischarged D-aminoacyl-tRNAs. Also deacylates mischarged glycyl-tRNA(Ala), protecting cells against glycine mischarging by AlaRS. Acts via tRNA-based rather than protein-based catalysis; rejects L-amino acids rather than detecting D-amino acids in the active site. By recycling D-aminoacyl-tRNA to D-amino acids and free tRNA molecules, this enzyme counteracts the toxicity associated with the formation of D-aminoacyl-tRNA entities in vivo and helps enforce protein L-homochirality. The sequence is that of D-aminoacyl-tRNA deacylase from Salmonella typhi.